The chain runs to 307 residues: Small ribosomal subunit protein uS3 (307 aa).

The 70-residue stretch at 17–86 (MDEYFAEQLN…NPQIDAQEVK (70 aa)) folds into the KH type-2 domain. Basic and acidic residues predominate over residues 201–226 (IEEPAEKPAEKQVEKPAVAPKKEAAK). The disordered stretch occupies residues 201-265 (IEEPAEKPAE…QVEASEDFEE (65 aa)). Positions 240 to 265 (PTEEPEVAEPEEAEEAQVEASEDFEE) are enriched in acidic residues.

It belongs to the universal ribosomal protein uS3 family. Part of the 30S ribosomal subunit.

Functionally, binds the lower part of the 30S subunit head. The sequence is that of Small ribosomal subunit protein uS3 from Methanosarcina mazei (strain ATCC BAA-159 / DSM 3647 / Goe1 / Go1 / JCM 11833 / OCM 88) (Methanosarcina frisia).